A 581-amino-acid polypeptide reads, in one-letter code: Semenogelin-2 (581 aa).

The signal sequence occupies residues 1–23 (MKSIILFVLSLLLILEKQAAVMG). 4 disordered regions span residues 24–62 (QKGG…SKGS), 132–157 (GGKA…GISS), 173–194 (KEQA…QSSY), and 271–581 (NLNQ…PIST). Composition is skewed to polar residues over residues 138–157 (GTQN…GISS) and 174–194 (EQAS…QSSY). Residues 291 to 310 (HTEERQLNHGEKSVQKDISK) show a composition bias toward basic and acidic residues. Residues 324–333 (KSQNQVTIHS) are compositionally biased toward polar residues. Positions 334–344 (QDQEHGHKENK) are enriched in basic and acidic residues. Over residues 366–396 (KSVSKGSISIQTEEQIHGKSQNQVRIPSQAQ) the composition is skewed to polar residues. 2 stretches are compositionally biased toward basic and acidic residues: residues 412–425 (TEER…KDIQ) and 455–464 (DQEHGHKENK). Polar residues-rich tracts occupy residues 481 to 497 (GKNT…SFQT) and 505 to 529 (SQIQ…SGQS). Composition is skewed to basic and acidic residues over residues 530 to 545 (ADRE…KGRY) and 558 to 581 (TEHE…PIST).

It belongs to the semenogelin family. As to quaternary structure, interacts with SERPINA5.

The protein resides in the secreted. In terms of biological role, participates in the formation of a gel matrix (sperm coagulum) entrapping the accessory gland secretions and ejaculated spermatozoa. The polypeptide is Semenogelin-2 (SEMG2) (Pongo abelii (Sumatran orangutan)).